A 354-amino-acid chain; its full sequence is DNA polymerase IV (354 aa).

The region spanning 8 to 189 (IIHIDMDCFY…LPLQKIPGVG (182 aa)) is the UmuC domain. Mg(2+) contacts are provided by D12 and D107. Residue E108 is part of the active site.

The protein belongs to the DNA polymerase type-Y family. As to quaternary structure, monomer. Mg(2+) serves as cofactor.

Its subcellular location is the cytoplasm. It catalyses the reaction DNA(n) + a 2'-deoxyribonucleoside 5'-triphosphate = DNA(n+1) + diphosphate. Functionally, poorly processive, error-prone DNA polymerase involved in untargeted mutagenesis. Copies undamaged DNA at stalled replication forks, which arise in vivo from mismatched or misaligned primer ends. These misaligned primers can be extended by PolIV. Exhibits no 3'-5' exonuclease (proofreading) activity. May be involved in translesional synthesis, in conjunction with the beta clamp from PolIII. This Vibrio vulnificus (strain CMCP6) protein is DNA polymerase IV.